The primary structure comprises 150 residues: UPF0208 membrane protein VP2081 (150 aa).

A run of 2 helical transmembrane segments spans residues 42–62 and 70–90; these read FGIKVMPAVAAISVLTQMAFN and SIVVALFAISLPLQGIWWLGA.

It belongs to the UPF0208 family.

Its subcellular location is the cell inner membrane. The chain is UPF0208 membrane protein VP2081 from Vibrio parahaemolyticus serotype O3:K6 (strain RIMD 2210633).